Reading from the N-terminus, the 208-residue chain is MVQRSKSSANWLREHFNDPFVKQAQKDGYRSRASYKLLEIQEKDRLIRPGMSVIDLGAAPGGWSQVTSRLIGGQGRLIASDILEMDSIADVTFIQGDFTHDEVLQRILEAVGDSHVDLVISDMAPNMSGTPAVDIPRAMFLCELALDLATRVLKPGGDFLIKIFQGEGFDVYLKDVRSKFDKVQMRKPSSSRDRSREQYLLGRGFKGA.

S-adenosyl-L-methionine contacts are provided by glycine 61, tryptophan 63, aspartate 81, aspartate 97, and aspartate 122. The active-site Proton acceptor is the lysine 162.

It belongs to the class I-like SAM-binding methyltransferase superfamily. RNA methyltransferase RlmE family.

It localises to the cytoplasm. The catalysed reaction is uridine(2552) in 23S rRNA + S-adenosyl-L-methionine = 2'-O-methyluridine(2552) in 23S rRNA + S-adenosyl-L-homocysteine + H(+). Its function is as follows. Specifically methylates the uridine in position 2552 of 23S rRNA at the 2'-O position of the ribose in the fully assembled 50S ribosomal subunit. This Pseudomonas putida (strain GB-1) protein is Ribosomal RNA large subunit methyltransferase E.